A 715-amino-acid polypeptide reads, in one-letter code: Interferon-induced GTP-binding protein Mx2 (715 aa).

Residues 1 to 14 are compositionally biased toward basic residues; that stretch reads MSKAHKSWPHRRRN. Disordered stretches follow at residues 1 to 24 and 69 to 88; these read MSKAHKSWPHRRRNQFSSQRSLKK and NNQPLPGNTSQPRAKGPENN. Residues 69-80 are compositionally biased toward polar residues; sequence NNQPLPGNTSQP. Positions 115 to 387 constitute a Dynamin-type G domain; sequence DLALPAIAVI…LITHIQKSLP (273 aa). Residues 125 to 132 are G1 motif; that stretch reads GDQSSGKS. 125 to 132 is a GTP binding site; that stretch reads GDQSSGKS. Positions 150 to 152 are G2 motif; that stretch reads VTR. The interval 225-228 is G3 motif; that stretch reads DLPG. GTP is bound by residues 225-229 and 294-297; these read DLPGI and TKPD. Positions 294 to 297 are G4 motif; sequence TKPD. Residues 326–329 form a G5 motif region; it reads KCRG. A GED domain is found at 623-714; it reads FNEIGVHLNA…ALCQFSSKEI (92 aa).

Belongs to the TRAFAC class dynamin-like GTPase superfamily. Dynamin/Fzo/YdjA family.

The protein resides in the cytoplasm. Its subcellular location is the nucleus. Its function is as follows. Interferon-induced dynamin-like GTPase with antiviral activity. This is Interferon-induced GTP-binding protein Mx2 (MX2) from Macaca mulatta (Rhesus macaque).